The chain runs to 229 residues: Octanoyltransferase (229 aa).

One can recognise a BPL/LPL catalytic domain in the interval 47-225; the sequence is PSSPEAVWIL…SLAARFHLAW (179 aa). Substrate contacts are provided by residues 89–96, 156–158, and 169–171; these read RGGEVTHH, AIG, and GLA. Cysteine 187 acts as the Acyl-thioester intermediate in catalysis.

Belongs to the LipB family.

Its subcellular location is the cytoplasm. It catalyses the reaction octanoyl-[ACP] + L-lysyl-[protein] = N(6)-octanoyl-L-lysyl-[protein] + holo-[ACP] + H(+). It functions in the pathway protein modification; protein lipoylation via endogenous pathway; protein N(6)-(lipoyl)lysine from octanoyl-[acyl-carrier-protein]: step 1/2. Functionally, catalyzes the transfer of endogenously produced octanoic acid from octanoyl-acyl-carrier-protein onto the lipoyl domains of lipoate-dependent enzymes. Lipoyl-ACP can also act as a substrate although octanoyl-ACP is likely to be the physiological substrate. In Synechococcus sp. (strain CC9902), this protein is Octanoyltransferase.